Consider the following 316-residue polypeptide: BTB/POZ domain-containing adapter for CUL3-mediated RhoA degradation protein 2 (316 aa).

The 69-residue stretch at 28 to 96 (KYVQLNVGGS…LRDDTVTLPQ (69 aa)) folds into the BTB domain. Residues 268–279 (EATSRSRSQASP) show a composition bias toward polar residues. A disordered region spans residues 268–287 (EATSRSRSQASPSEDEDTFE). Position 278 is a phosphoserine (Ser-278). Ser-280 carries the phosphoserine; by CK2 modification.

Belongs to the BACURD family. In terms of assembly, component of the BCR(TNFAIP1) E3 ubiquitin ligase complex, at least composed of CUL3, TNFAIP1/BACURD2 and RBX1. Interacts with RHOA; with a preference for RhoA-GDP. Interacts with RHOB. Interacts with CSNK2B. Interacts with PCNA. Post-translationally, phosphorylation at Ser-280 by CK2 facilitates the nucleus localization and increases interaction with PCNA.

The protein resides in the cytoplasm. Its subcellular location is the nucleus. The protein localises to the endosome. It functions in the pathway protein modification; protein ubiquitination. Substrate-specific adapter of a BCR (BTB-CUL3-RBX1) E3 ubiquitin-protein ligase complex involved in regulation of cytoskeleton structure. The BCR(TNFAIP1) E3 ubiquitin ligase complex mediates the ubiquitination of RHOA, leading to its degradation by the proteasome, thereby regulating the actin cytoskeleton and cell migration. Its interaction with RHOB may regulate apoptosis. May enhance the PCNA-dependent DNA polymerase delta activity. This Rattus norvegicus (Rat) protein is BTB/POZ domain-containing adapter for CUL3-mediated RhoA degradation protein 2 (Tnfaip1).